The chain runs to 453 residues: Ferruginol synthase (453 aa).

A helical transmembrane segment spans residues 15–35 (LSKKYGPLMSIHLGSLYTVIV). Residue Cys397 coordinates heme.

Belongs to the cytochrome P450 family. Heme is required as a cofactor. As to expression, expressed in leaf glandular trichomes.

It is found in the membrane. The catalysed reaction is abieta-8,11,13-triene + reduced [NADPH--hemoprotein reductase] + O2 = ferruginol + oxidized [NADPH--hemoprotein reductase] + H2O + H(+). The enzyme catalyses ferruginol + reduced [NADPH--hemoprotein reductase] + O2 = 11-hydroxyferruginol + oxidized [NADPH--hemoprotein reductase] + H2O + H(+). It carries out the reaction miltiradiene + 2 reduced [NADPH--hemoprotein reductase] + 2 O2 = 11-oxomiltiradiene + 2 oxidized [NADPH--hemoprotein reductase] + 3 H2O + 2 H(+). It participates in secondary metabolite biosynthesis; terpenoid biosynthesis. Monooxygenase involved in the biosynthesis of labdane-related diterpenes natural products. Catalyzes the oxidation of abietatriene to produce ferruginol. Ferruginol is an intermediate in the biosynthesis of carnosate, a potent antioxidant. May also convert miltiradiene into 11-oxomiltiradiene. The sequence is that of Ferruginol synthase from Salvia pomifera (Apple sage).